Reading from the N-terminus, the 394-residue chain is Probable peptidoglycan glycosyltransferase FtsW (394 aa).

The Cytoplasmic segment spans residues 1–26 (MNTMRPRHLNQRGKPVSRPISLYDKW). The helical transmembrane segment at 27-47 (LIGAVFGLLIIGLMMVASSSV) threads the bilayer. At 48-57 (MISTKYFHQP) the chain is on the periplasmic side. A helical membrane pass occupies residues 58–78 (FHFLIRQACYLFVGLLLALIV). The Cytoplasmic segment spans residues 79–88 (VRTDSSFWEK). Residues 89 to 109 (ISMPMMIGCVFLLLIVLIPGI) form a helical membrane-spanning segment. Residues 110–118 (GKSVNGSRR) are Periplasmic-facing. The helical transmembrane segment at 119–139 (WLALGPIGVQVSELTKLAMIF) threads the bilayer. Residues 140–154 (YLSGYLVRQQEAVCE) are Cytoplasmic-facing. The helical transmembrane segment at 155–175 (SIFGFIKPMAILAVVSVLLLL) threads the bilayer. At 176-177 (EP) the chain is on the periplasmic side. A helical transmembrane segment spans residues 178-198 (DFGATVVISGTVMAMLFLAGV). Topologically, residues 199 to 201 (KLR) are cytoplasmic. A helical membrane pass occupies residues 202–222 (YYFGLMLVVVTALALLAVSSP). Topologically, residues 223-278 (YRVARLTAFLDPWADQYNSGYQLTQSLIAFGRGGWFGTGLGESIQKLLYLPEAHTD) are periplasmic. The chain crosses the membrane as a helical span at residues 279-299 (FLFAVIAEELGLFGILVVITL). Over 300-327 (YSILVIRGLNIGYTAYTQERHFASYTAY) the chain is Cytoplasmic. A helical membrane pass occupies residues 328-348 (GLTIWLALQASINMGVNAGLL). The Periplasmic segment spans residues 349–354 (PTKGLT). A helical membrane pass occupies residues 355–375 (LPLLSYGGASMVINCIVIALL). The Cytoplasmic segment spans residues 376–394 (LRIDHENRWQSLGLRPLTA).

It belongs to the SEDS family. FtsW subfamily.

The protein localises to the cell inner membrane. It carries out the reaction [GlcNAc-(1-&gt;4)-Mur2Ac(oyl-L-Ala-gamma-D-Glu-L-Lys-D-Ala-D-Ala)](n)-di-trans,octa-cis-undecaprenyl diphosphate + beta-D-GlcNAc-(1-&gt;4)-Mur2Ac(oyl-L-Ala-gamma-D-Glu-L-Lys-D-Ala-D-Ala)-di-trans,octa-cis-undecaprenyl diphosphate = [GlcNAc-(1-&gt;4)-Mur2Ac(oyl-L-Ala-gamma-D-Glu-L-Lys-D-Ala-D-Ala)](n+1)-di-trans,octa-cis-undecaprenyl diphosphate + di-trans,octa-cis-undecaprenyl diphosphate + H(+). The protein operates within cell wall biogenesis; peptidoglycan biosynthesis. Peptidoglycan polymerase that is essential for cell division. This Legionella pneumophila subsp. pneumophila (strain Philadelphia 1 / ATCC 33152 / DSM 7513) protein is Probable peptidoglycan glycosyltransferase FtsW.